Reading from the N-terminus, the 292-residue chain is Large ribosomal subunit protein bL19m (292 aa).

The interval 40 to 61 (PVRQQSTGPSEPGAFQPPPKPV) is disordered. Ser-77 carries the phosphoserine modification.

This sequence belongs to the bacterial ribosomal protein bL19 family. Component of the mitochondrial ribosome large subunit (39S) which comprises a 16S rRNA and about 50 distinct proteins.

Its subcellular location is the mitochondrion. This is Large ribosomal subunit protein bL19m (MRPL19) from Pongo abelii (Sumatran orangutan).